A 146-amino-acid chain; its full sequence is Antirestriction protein KlcA (146 aa).

Belongs to the antirestriction protein family.

Functionally, could be involved in overcoming restriction barriers during establishment after conjugative transfer. This is Antirestriction protein KlcA (klcA) from Escherichia coli.